Here is a 326-residue protein sequence, read N- to C-terminus: Chain length determinant protein (326 aa).

Residues 1–31 (MRVENNNVSGQNHDPEQIDLIDLLVQLWRGK) are Cytoplasmic-facing. A helical membrane pass occupies residues 32–52 (MTIIISVIVAIALAIGYLAVA). The Periplasmic portion of the chain corresponds to 53-295 (KEKWTSTAII…LPIRRDSPKK (243 aa)). Residues 296-316 (AITLILAVLLGGMVGAGIVLG) form a helical membrane-spanning segment. Topologically, residues 317–326 (RNALRNYNAK) are cytoplasmic.

It belongs to the WzzB/Cld/Rol family. Homodimer.

It is found in the cell inner membrane. Its pathway is bacterial outer membrane biogenesis; lipopolysaccharide biosynthesis. Confers a modal distribution of chain length on the O-antigen component of lipopolysaccharide (LPS). Gives rise to a reduced number of short chain molecules and increases in numbers of longer molecules. The sequence is that of Chain length determinant protein (wzzB) from Escherichia coli (strain K12).